Here is a 317-residue protein sequence, read N- to C-terminus: Transaldolase (317 aa).

Lysine 132 serves as the catalytic Schiff-base intermediate with substrate.

This sequence belongs to the transaldolase family. Type 1 subfamily. In terms of assembly, homodimer.

It localises to the cytoplasm. It catalyses the reaction D-sedoheptulose 7-phosphate + D-glyceraldehyde 3-phosphate = D-erythrose 4-phosphate + beta-D-fructose 6-phosphate. Its pathway is carbohydrate degradation; pentose phosphate pathway; D-glyceraldehyde 3-phosphate and beta-D-fructose 6-phosphate from D-ribose 5-phosphate and D-xylulose 5-phosphate (non-oxidative stage): step 2/3. Functionally, transaldolase is important for the balance of metabolites in the pentose-phosphate pathway. This is Transaldolase from Yersinia pseudotuberculosis serotype O:1b (strain IP 31758).